The chain runs to 287 residues: MVYTTRQIGAKNTLDYKVFIEEDGKPVSPFHDIPLYADKEENIFNMVVEIPRWTNAKLEITKEETLNPIIQDTKKGKLRYVRNCFPHHGYIHNYGAFPQTWEDPNQTHPETKAVGDNDPVDVLEIGETIGYTGQVKQVKVLGIMALLDEGETDWKVIAIDINDPLAPKLNDIEDVEKYFPGLLRATNEWFRIYKIPDGKPENQFAFSGEAKNKKYALDIIKETNESWKQLIAGKSTDSKDIALENTKVTDSPYYSASAASAIPAAAPQADAPIDKSVDKWFFISGSA.

Arg79 contributes to the diphosphate binding site. Mg(2+)-binding residues include Asp116, Asp121, and Asp153.

The protein belongs to the PPase family. It depends on Mg(2+) as a cofactor.

It localises to the cytoplasm. The catalysed reaction is diphosphate + H2O = 2 phosphate + H(+). The chain is Inorganic pyrophosphatase (IPP1) from Candida glabrata (strain ATCC 2001 / BCRC 20586 / JCM 3761 / NBRC 0622 / NRRL Y-65 / CBS 138) (Yeast).